The primary structure comprises 481 residues: Guanine nucleotide exchange factor C9orf72 (481 aa).

In terms of domain architecture, uDENN C9ORF72-type spans 23 to 194 (SPLLAATFAY…ELLSSMKSHS (172 aa)). The cDENN C9ORF72-type domain occupies 200 to 343 (DIADTVLNDD…SELTAFWRAT (144 aa)). In terms of domain architecture, dDENN C9ORF72-type spans 370–464 (VLHRDTLVKA…IKPGLHSFIF (95 aa)). Residues 461 to 481 (SFIFGRPFYTSVQERDVLMTF) are required for the homodimerization of the C9orf72-SMCR8 complex.

Component of the C9orf72-SMCR8 complex, at least composed of C9orf72, SMCR8 and WDR41. The complex is formed of two protomers, each individually consisting of one molecule each of C9orf72, SMCR8 and WDR41. The protomers homodimerize via an interaction between C9orf72 (via C-terminus) and SMCR8 (via N-terminus). Within each protomer SMCR8 (via DENN domain) acts as a bridging protein between WDR41 (via C-terminus and N-terminus) and C9orf72 (via C-terminus). The C9orf72-SMCR8 complex associates with the ULK1/ATG1 kinase complex. Interacts with ULK1/ATG1 kinase complex members ULK1, ATG13 and RB1CC1. Interacts with SMCR8; the interaction is direct. Interacts with HNRNPA1, HNRNPA2B1 and UBQLN2. Interacts with small Rab GTPase RAB1A; the interaction mediates recruitment of RAB1A to the ULK1/ATG1 kinase complex. Also interacts with small Rab GTPase RAB7A. Interacts with cofilin. Interacts with GTP-binding proteins ARF1 and ARF6. Interacts with the DLG4/PSD-95. Interacts with CARM1 (via PH domain-like fold). Interacts with RAB39A and RAB39B (in GDP-bound forms); functions as GEF for RAB39A and RAB39B. As to expression, both isoforms are widely expressed, including kidney, lung, liver, heart, testis and several brain regions, such as cerebellum. Also expressed in the frontal cortex and in lymphoblasts (at protein level).

It localises to the cytoplasm. It is found in the nucleus. The protein localises to the P-body. The protein resides in the stress granule. Its subcellular location is the endosome. It localises to the lysosome. It is found in the cytoplasmic vesicle. The protein localises to the autophagosome. The protein resides in the autolysosome. Its subcellular location is the secreted. It localises to the cell projection. It is found in the axon. The protein localises to the growth cone. The protein resides in the perikaryon. Its subcellular location is the dendrite. It localises to the presynapse. It is found in the postsynapse. The protein localises to the nucleus membrane. In terms of biological role, acts as a guanine-nucleotide releasing factor (GEF) for Rab GTPases by promoting the conversion of inactive RAB-GDP to the active form RAB-GTP. Acts as a GEF for RAB39A which enables HOPS-mediated autophagosome-lysosome membrane tethering and fusion in mammalian autophagy. Component of the C9orf72-SMCR8 complex where both subunits display GEF activity and that regulates autophagy. As part of the C9orf72-SMCR8-WDR41 (CSW) complex, functions as GEF for RAB8A and RAB39B, thereby promoting autophagosome maturation. As part of the C9orf72-SMCR8 complex, also functions as GTPase activating protein (GAP) for RAB8A and RAB11A in vitro. The C9orf72-SMCR8 complex also acts as a regulator of autophagy initiation by interacting with the ULK1/ATG1 kinase complex and modulating its protein kinase activity. Promotes initiation of autophagy by regulating the RAB1A-dependent trafficking of the ULK1/ATG1 kinase complex to the phagophore which leads to autophagosome formation. Acts as a regulator of mTORC1 signaling by promoting phosphorylation of mTORC1 substrates. Plays a role in endosomal trafficking. May be involved in regulating the maturation of phagosomes to lysosomes. Promotes the lysosomal localization and lysosome-mediated degradation of CARM1 which leads to inhibition of starvation-induced lipid metabolism. Regulates actin dynamics in motor neurons by inhibiting the GTP-binding activity of ARF6, leading to ARF6 inactivation. This reduces the activity of the LIMK1 and LIMK2 kinases which are responsible for phosphorylation and inactivation of cofilin, leading to CFL1/cofilin activation. Positively regulates axon extension and axon growth cone size in spinal motor neurons. Required for SMCR8 protein expression and localization at pre- and post-synaptic compartments in the forebrain, also regulates protein abundance of RAB3A and GRIA1/GLUR1 in post-synaptic compartments in the forebrain and hippocampus. Plays a role within the hematopoietic system in restricting inflammation and the development of autoimmunity. Regulates stress granule assembly in response to cellular stress. Functionally, does not play a role in regulation of stress granule assembly in response to cellular stress. The protein is Guanine nucleotide exchange factor C9orf72 of Homo sapiens (Human).